Here is a 387-residue protein sequence, read N- to C-terminus: 3-ketoacyl-CoA thiolase (387 aa).

Cys-91 functions as the Acyl-thioester intermediate in the catalytic mechanism. Residues His-343 and Cys-373 each act as proton acceptor in the active site.

This sequence belongs to the thiolase-like superfamily. Thiolase family. Heterotetramer of two alpha chains (FadB) and two beta chains (FadA).

It is found in the cytoplasm. It carries out the reaction an acyl-CoA + acetyl-CoA = a 3-oxoacyl-CoA + CoA. It functions in the pathway lipid metabolism; fatty acid beta-oxidation. Its function is as follows. Catalyzes the final step of fatty acid oxidation in which acetyl-CoA is released and the CoA ester of a fatty acid two carbons shorter is formed. The protein is 3-ketoacyl-CoA thiolase of Shewanella baltica (strain OS155 / ATCC BAA-1091).